We begin with the raw amino-acid sequence, 309 residues long: Calponin-2 (309 aa).

An N-acetylserine modification is found at Ser-2. 2 positions are modified to N6-acetyllysine: Lys-8 and Lys-25. In terms of domain architecture, Calponin-homology (CH) spans 28–132 (PQKEAELRTW…SLLALAGKAK (105 aa)). Ser-138 is modified (phosphoserine). 3 Calponin-like repeats span residues 166 to 191 (IGLQ…RHLY), 206 to 231 (ISLQ…RHIY), and 245 to 269 (MSLQ…RQIY). A disordered region spans residues 283–309 (APSGTGDCPDPGEVPEYPPYYQEEAGY).

Belongs to the calponin family. In terms of tissue distribution, heart and smooth muscle.

In terms of biological role, thin filament-associated protein that is implicated in the regulation and modulation of smooth muscle contraction. It is capable of binding to actin, calmodulin and tropomyosin. The interaction of calponin with actin inhibits the actomyosin Mg-ATPase activity. This chain is Calponin-2 (CNN2), found in Homo sapiens (Human).